Here is a 700-residue protein sequence, read N- to C-terminus: Elongation factor G (700 aa).

The region spanning 8–290 (ERYRNIGISA…AVVEYLPAPT (283 aa)) is the tr-type G domain. GTP-binding positions include 17–24 (AHIDAGKT), 88–92 (DTPGH), and 142–145 (NKMD).

The protein belongs to the TRAFAC class translation factor GTPase superfamily. Classic translation factor GTPase family. EF-G/EF-2 subfamily.

Its subcellular location is the cytoplasm. In terms of biological role, catalyzes the GTP-dependent ribosomal translocation step during translation elongation. During this step, the ribosome changes from the pre-translocational (PRE) to the post-translocational (POST) state as the newly formed A-site-bound peptidyl-tRNA and P-site-bound deacylated tRNA move to the P and E sites, respectively. Catalyzes the coordinated movement of the two tRNA molecules, the mRNA and conformational changes in the ribosome. This chain is Elongation factor G, found in Haemophilus influenzae (strain 86-028NP).